We begin with the raw amino-acid sequence, 567 residues long: Adenine deaminase (567 aa).

This sequence belongs to the metallo-dependent hydrolases superfamily. Adenine deaminase family. Requires Mn(2+) as cofactor.

It catalyses the reaction adenine + H2O + H(+) = hypoxanthine + NH4(+). In Methanothrix thermoacetophila (strain DSM 6194 / JCM 14653 / NBRC 101360 / PT) (Methanosaeta thermophila), this protein is Adenine deaminase.